The following is a 187-amino-acid chain: Elongation factor P (187 aa).

This sequence belongs to the elongation factor P family.

The protein resides in the cytoplasm. Its pathway is protein biosynthesis; polypeptide chain elongation. Involved in peptide bond synthesis. Stimulates efficient translation and peptide-bond synthesis on native or reconstituted 70S ribosomes in vitro. Probably functions indirectly by altering the affinity of the ribosome for aminoacyl-tRNA, thus increasing their reactivity as acceptors for peptidyl transferase. The sequence is that of Elongation factor P from Rhodospirillum rubrum (strain ATCC 11170 / ATH 1.1.1 / DSM 467 / LMG 4362 / NCIMB 8255 / S1).